A 247-amino-acid chain; its full sequence is Carboxy-S-adenosyl-L-methionine synthase (247 aa).

S-adenosyl-L-methionine is bound by residues tyrosine 40, 65–67, 90–91, 122–123, asparagine 137, and arginine 204; these read GAS, DN, and DI.

The protein belongs to the class I-like SAM-binding methyltransferase superfamily. Cx-SAM synthase family. As to quaternary structure, homodimer.

The catalysed reaction is prephenate + S-adenosyl-L-methionine = carboxy-S-adenosyl-L-methionine + 3-phenylpyruvate + H2O. In terms of biological role, catalyzes the conversion of S-adenosyl-L-methionine (SAM) to carboxy-S-adenosyl-L-methionine (Cx-SAM). The polypeptide is Carboxy-S-adenosyl-L-methionine synthase (Pseudomonas putida (strain GB-1)).